The chain runs to 342 residues: uncharacterized protein (342 aa).

Positions T155–D309 constitute a Nudix hydrolase domain.

This is an uncharacterized protein from Saccharomyces cerevisiae (strain ATCC 204508 / S288c) (Baker's yeast).